The sequence spans 239 residues: Small ribosomal subunit protein uS2 (239 aa).

It belongs to the universal ribosomal protein uS2 family.

In Francisella philomiragia subsp. philomiragia (strain ATCC 25017 / CCUG 19701 / FSC 153 / O#319-036), this protein is Small ribosomal subunit protein uS2.